Here is a 135-residue protein sequence, read N- to C-terminus: Small ribosomal subunit protein uS11 (135 aa).

Residues Met-1–Gly-10 show a composition bias toward polar residues. Residues Met-1 to His-28 are disordered. A compositionally biased stretch (basic residues) spans Lys-12–His-28.

The protein belongs to the universal ribosomal protein uS11 family. As to quaternary structure, part of the 30S ribosomal subunit. Interacts with proteins S7 and S18. Binds to IF-3.

In terms of biological role, located on the platform of the 30S subunit, it bridges several disparate RNA helices of the 16S rRNA. Forms part of the Shine-Dalgarno cleft in the 70S ribosome. This is Small ribosomal subunit protein uS11 from Acidothermus cellulolyticus (strain ATCC 43068 / DSM 8971 / 11B).